A 248-amino-acid chain; its full sequence is Mannose-binding protein C (248 aa).

A signal peptide spans 1–20; the sequence is MSLFPSLPLLLLSVVATSYS. One can recognise a Collagen-like domain in the interval 42 to 99; sequence GINGFPGKDGRDGTKGEKGEPGQGLRGLQGPPGKLGPPGNPGPSGSPGPKGQKGDPGE. The interval 43–111 is disordered; sequence INGFPGKDGR…DCDSSLAASE (69 aa). P47 carries the 4-hydroxyproline modification. Residues 49–61 are compositionally biased toward basic and acidic residues; the sequence is KDGRDGTKGEKGE. 4-hydroxyproline occurs at positions 73, 79, 82, and 88. Positions 75–87 are enriched in pro residues; that stretch reads KLGPPGNPGPSGS. Positions 112-130 form a coiled coil; sequence RKALQTEMAHIKKWLTFSL. Residues 134-245 enclose the C-type lectin domain; that stretch reads VGNKFFLTNG…CSSSHLALCE (112 aa). 2 disulfide bridges follow: C155/C244 and C222/C236.

In terms of assembly, oligomeric complex of 3 or more homotrimers. Interacts with MASP1 and MASP2. Interacts with MEP1A and MEP1B and may inhibit their catalytic activity. Hydroxylation on proline residues within the sequence motif, GXPG, is most likely to be 4-hydroxy as this fits the requirement for 4-hydroxylation in vertebrates.

It is found in the secreted. Functionally, calcium-dependent lectin involved in innate immune defense. Binds mannose, fucose and N-acetylglucosamine on different microorganisms and activates the lectin complement pathway. Binds to late apoptotic cells, as well as to apoptotic blebs and to necrotic cells, but not to early apoptotic cells, facilitating their uptake by macrophages. This Trachypithecus obscurus (Dusky leaf-monkey) protein is Mannose-binding protein C (MBL2).